The following is a 565-amino-acid chain: Urocanate hydratase (565 aa).

Residues 61-62, Gln-139, 185-187, Glu-205, Arg-210, 251-252, 272-276, 282-283, and Tyr-331 each bind NAD(+); these read GG, GMG, NA, QTSAH, and YL. Residue Cys-419 is part of the active site. The segment at 453–472 is disordered; sequence LDSGSVASPNRETESMRDGS. Residues 463-472 are compositionally biased toward basic and acidic residues; that stretch reads RETESMRDGS. Residue Gly-501 coordinates NAD(+).

Belongs to the urocanase family. NAD(+) is required as a cofactor.

It localises to the cytoplasm. The enzyme catalyses 4-imidazolone-5-propanoate = trans-urocanate + H2O. It functions in the pathway amino-acid degradation; L-histidine degradation into L-glutamate; N-formimidoyl-L-glutamate from L-histidine: step 2/3. Catalyzes the conversion of urocanate to 4-imidazolone-5-propionate. This is Urocanate hydratase from Pseudomonas syringae pv. tomato (strain ATCC BAA-871 / DC3000).